Reading from the N-terminus, the 468-residue chain is Keratin, type I cytoskeletal 26 (468 aa).

The interval 1 to 82 (MSFRLSGGSR…GNEHSLLSGN (82 aa)) is head. The segment at 83-118 (EKVTMQNLNDRLASYLDHVHALEEANADLEQKIKGW) is coil 1A. An IF rod domain is found at 83–398 (EKVTMQNLND…NLLDGEERKS (316 aa)). The linker 1 stretch occupies residues 119–140 (YEKCEPGSSREHDHDYSRYFSV). The segment at 141–232 (IEDLKRQIIS…KSHEEEMEVL (92 aa)) is coil 1B. Positions 233-255 (QYTAGGNVNVEMNATPGVDLTVL) are linker 12. A coil 2 region spans residues 256-394 (LNNMRAEYED…DIYCNLLDGE (139 aa)). A tail region spans residues 395–465 (ERKSKSTCYK…NITVEQRVPS (71 aa)).

It belongs to the intermediate filament family. As to quaternary structure, heterotetramer of two type I and two type II keratins. In terms of tissue distribution, strongly expressed in skin and scalp, and weak expression observed in thymus and tongue. In the hair follicle, expression is restricted to the mid- to upper inner root sheath cuticle, being present slightly above the apex of the dermal papilla (at protein level).

This is Keratin, type I cytoskeletal 26 from Homo sapiens (Human).